The primary structure comprises 366 residues: 1-aminocyclopropane-1-carboxylate oxidase homolog 12 (366 aa).

The 100-residue stretch at 215–314 (KTLLMICHYY…RISVASFFSS (100 aa)) folds into the Fe2OG dioxygenase domain. Fe cation-binding residues include histidine 239, aspartate 241, and histidine 295. Residue arginine 305 coordinates 2-oxoglutarate.

This sequence belongs to the iron/ascorbate-dependent oxidoreductase family. It depends on Fe(2+) as a cofactor.

The sequence is that of 1-aminocyclopropane-1-carboxylate oxidase homolog 12 from Arabidopsis thaliana (Mouse-ear cress).